The following is a 296-amino-acid chain: Prostate androgen-regulated mucin-like protein 1 homolog (296 aa).

The first 20 residues, 1–20 (MVCKVLIALCIFTAGLRVQG), serve as a signal peptide directing secretion. The Extracellular segment spans residues 21 to 244 (SPTVPLPVSL…EVENALSSGS (224 aa)). N-linked (GlcNAc...) asparagine glycosylation is found at Asn-61 and Asn-95. Residues 72-220 (LTSQLPTDHR…SPQDTEPGKV (149 aa)) form a disordered region. A compositionally biased stretch (basic and acidic residues) spans 78 to 95 (TDHREEAVTSPPLKRDVN). Polar residues predominate over residues 96-110 (STDSSPAGFPSTSSD). Residues 139 to 167 (LLSSQAPTSATTSPATSLSESLSASVTSS) show a composition bias toward low complexity. Polar residues predominate over residues 168 to 177 (HNSTVANIQP). The N-linked (GlcNAc...) asparagine glycan is linked to Asn-169. The segment covering 206 to 217 (VPKEKSPQDTEP) has biased composition (basic and acidic residues). Residues 245–265 (IAAITVTVIAVVLLVFGGAAY) form a helical membrane-spanning segment. Over 266-296 (LKIRHSSYGRLLDDHDYGSWGNYNNPLYDDS) the chain is Cytoplasmic. Ser-284 carries the post-translational modification Phosphoserine.

This sequence belongs to the PARM family. In terms of processing, highly N-glycosylated and O-glycosylated.

It is found in the cell membrane. It localises to the golgi apparatus membrane. Its subcellular location is the endosome membrane. Its function is as follows. May regulate TLP1 expression and telomerase activity, thus enabling certain prostatic cells to resist apoptosis. This Mus musculus (Mouse) protein is Prostate androgen-regulated mucin-like protein 1 homolog (Parm1).